The sequence spans 632 residues: Golgin subfamily A member 8N (632 aa).

The interval 1–76 is disordered; it reads MAEETQHNKL…TSSATLKDLE (76 aa). The segment covering 38-50 has biased composition (polar residues); sequence TNGSIPETATSGG. Coiled-coil stretches lie at residues 85-150 and 209-421; these read VLDS…TDLY and ELEQ…SLMA. 3 disordered regions span residues 423–445, 505–524, and 552–573; these read PGEG…PMPS, DAAL…DEGE, and NSAD…ADKH. Positions 508–520 are enriched in gly residues; it reads LGGGHHQAGAQGG.

The protein belongs to the GOLGA8 family.

The sequence is that of Golgin subfamily A member 8N from Homo sapiens (Human).